The sequence spans 232 residues: EEF1A lysine methyltransferase 3 (232 aa).

Residues Trp57, 83–85 (GAG), Asp104, Trp133, and Ala150 contribute to the S-adenosyl-L-methionine site.

The protein belongs to the methyltransferase superfamily. METTL21 family. Interacts with members of the heat shock protein 70 and 90 families and of the TCP-1 chaperonin family, as well as with HSPD1, STIP1 and tubulin; at least some of these proteins may be methylation substrates.

The protein localises to the cytoplasm. It localises to the cytoskeleton. Its subcellular location is the microtubule organizing center. It is found in the centrosome. It carries out the reaction L-lysyl-[protein] + 3 S-adenosyl-L-methionine = N(6),N(6),N(6)-trimethyl-L-lysyl-[protein] + 3 S-adenosyl-L-homocysteine + 3 H(+). The enzyme catalyses L-lysyl-[protein] + S-adenosyl-L-methionine = N(6)-methyl-L-lysyl-[protein] + S-adenosyl-L-homocysteine + H(+). The catalysed reaction is N(6)-methyl-L-lysyl-[protein] + S-adenosyl-L-methionine = N(6),N(6)-dimethyl-L-lysyl-[protein] + S-adenosyl-L-homocysteine + H(+). It catalyses the reaction N(6),N(6)-dimethyl-L-lysyl-[protein] + S-adenosyl-L-methionine = N(6),N(6),N(6)-trimethyl-L-lysyl-[protein] + S-adenosyl-L-homocysteine + H(+). Its function is as follows. Protein-lysine methyltransferase that selectively mono-, di- and trimethylates 'Lys-165' of the translation elongation factors EEF1A1 and EEF1A2 in an aminoacyl-tRNA and GTP-dependent manner. EEF1A1 methylation by EEF1AKMT3 is dynamic as well as inducible by stress conditions, such as ER-stress, and plays a regulatory role on mRNA translation. The chain is EEF1A lysine methyltransferase 3 from Mus musculus (Mouse).